A 501-amino-acid polypeptide reads, in one-letter code: Dipeptide and tripeptide permease B (501 aa).

Residues 1–27 (MRPSAPTGLLQQPKPFFMIFFVELWER) lie on the Cytoplasmic side of the membrane. Residues 28–48 (FGYYGVQGILAVFFVQQLGFS) form a helical membrane-spanning segment. At 49 to 52 (QEQS) the chain is on the periplasmic side. A helical transmembrane segment spans residues 53–73 (FITFGAFSALVYGLISVGGYV). At 74-82 (GDHVLGTKR) the chain is on the cytoplasmic side. The helical transmembrane segment at 83–103 (TMVLGAIVLVIGYFMTGMSIY) threads the bilayer. The Periplasmic segment spans residues 104–106 (NPD). The helical transmembrane segment at 107 to 127 (LIFYALGTIAVGNCLFKANPA) threads the bilayer. Residues 128–146 (SLLAKCYERGDPRLDGAFT) lie on the Cytoplasmic side of the membrane. A helical transmembrane segment spans residues 147 to 167 (LFYMSINIGSLISLSLAPVIA). The Periplasmic segment spans residues 168-172 (DHYGY). The helical transmembrane segment at 173–193 (TVTYNLCGVGLVIALLTFFAC) threads the bilayer. At 194-211 (RHMVRDIGSEPDHLPLDY) the chain is on the cytoplasmic side. Residues 212–232 (GKLLLVLLGSVALVFFCAWLM) form a helical membrane-spanning segment. His-233 is a topological domain (periplasmic). Residues 234-254 (HVVIANMVLMTVTLAVVIFFF) traverse the membrane as a helical segment. Residues 255 to 267 (REAFKLDAVARNK) lie on the Cytoplasmic side of the membrane. Residues 268 to 288 (MYVAFVLMLEAVVFYVLYAQM) traverse the membrane as a helical segment. The Periplasmic segment spans residues 289–311 (PTSLNFFAINNMHHEMLGMSVNP). A helical membrane pass occupies residues 312-332 (ISFQALNPFWVVVGSPVLAMI). Residues 333 to 350 (YTRLGSKGRDLTMPLKFT) are Cytoplasmic-facing. A helical membrane pass occupies residues 351 to 371 (LGMLFCSLGFLTAAASGIWFA). Residues 372–380 (DAQGLTSPW) are Periplasmic-facing. The chain crosses the membrane as a helical span at residues 381–401 (FMVLIYLFQSLGELMISALGL). Over 402 to 411 (AMVAALVPQR) the chain is Cytoplasmic. The chain crosses the membrane as a helical span at residues 412–432 (LMGFILGMWFLTQAMASLLGG). Residues 433 to 456 (YVATFTAVPQGVTDPLQTLPIYTD) lie on the Periplasmic side of the membrane. Residues 457-477 (VFGKIGLVTLLVAVVMALMVP) form a helical membrane-spanning segment. The Cytoplasmic segment spans residues 478–501 (WLNRMMHAGQGEEGEDLLSQQAKA).

It belongs to the major facilitator superfamily. Proton-dependent oligopeptide transporter (POT/PTR) (TC 2.A.17) family. DtpB subfamily.

Its subcellular location is the cell inner membrane. Its function is as follows. Proton-dependent permease that transports di- and tripeptides. The sequence is that of Dipeptide and tripeptide permease B from Aeromonas hydrophila subsp. hydrophila (strain ATCC 7966 / DSM 30187 / BCRC 13018 / CCUG 14551 / JCM 1027 / KCTC 2358 / NCIMB 9240 / NCTC 8049).